The sequence spans 101 residues: RNA-binding protein Hfq (101 aa).

The 60-residue stretch at 9–68 folds into the Sm domain; it reads DPYLNALRRERIPVSIYLVNGIKLQGQIESFDQFIILLKNTVSQMVYKHAISTVVPARSI. The segment at 68–91 is disordered; the sequence is ISHNNNGSSQAQAPQQAVQTTQPV. The span at 77-91 shows a compositional bias: low complexity; that stretch reads QAQAPQQAVQTTQPV.

It belongs to the Hfq family. As to quaternary structure, homohexamer.

Its function is as follows. RNA chaperone that binds small regulatory RNA (sRNAs) and mRNAs to facilitate mRNA translational regulation in response to envelope stress, environmental stress and changes in metabolite concentrations. Also binds with high specificity to tRNAs. This Haemophilus ducreyi (strain 35000HP / ATCC 700724) protein is RNA-binding protein Hfq.